We begin with the raw amino-acid sequence, 269 residues long: Ribonuclease HII (269 aa).

One can recognise an RNase H type-2 domain in the interval 83–269 (YLIAGVDEVG…HRMSFLTNIL (187 aa)). Positions 89, 90, and 185 each coordinate a divalent metal cation.

This sequence belongs to the RNase HII family. Mn(2+) serves as cofactor. It depends on Mg(2+) as a cofactor.

It localises to the cytoplasm. The enzyme catalyses Endonucleolytic cleavage to 5'-phosphomonoester.. Endonuclease that specifically degrades the RNA of RNA-DNA hybrids. This Clostridium botulinum (strain ATCC 19397 / Type A) protein is Ribonuclease HII.